A 107-amino-acid chain; its full sequence is U1-lycotoxin-Ls1b (107 aa).

Residues 1–20 form the signal peptide; the sequence is MMKVLVVVALLVTLISYSSG. Residues 21 to 41 constitute a propeptide that is removed on maturation; the sequence is EGIDDLEADELLSLMANEQTR. Cystine bridges form between cysteine 44/cysteine 59, cysteine 51/cysteine 68, cysteine 58/cysteine 86, and cysteine 70/cysteine 84.

This sequence belongs to the neurotoxin 19 (CSTX) family. 04 (U1-Lctx) subfamily. Expressed by the venom gland.

The protein resides in the secreted. The protein is U1-lycotoxin-Ls1b of Lycosa singoriensis (Wolf spider).